Reading from the N-terminus, the 321-residue chain is Glucokinase (321 aa).

8-13 contributes to the ATP binding site; it reads GDVGGT.

This sequence belongs to the bacterial glucokinase family.

It is found in the cytoplasm. It catalyses the reaction D-glucose + ATP = D-glucose 6-phosphate + ADP + H(+). The chain is Glucokinase from Shigella boydii serotype 18 (strain CDC 3083-94 / BS512).